The sequence spans 151 residues: SsrA-binding protein (151 aa).

The tract at residues 131 to 151 (KRESIKEKDWKRDQSRLIRQK) is disordered.

It belongs to the SmpB family.

The protein localises to the cytoplasm. Its function is as follows. Required for rescue of stalled ribosomes mediated by trans-translation. Binds to transfer-messenger RNA (tmRNA), required for stable association of tmRNA with ribosomes. tmRNA and SmpB together mimic tRNA shape, replacing the anticodon stem-loop with SmpB. tmRNA is encoded by the ssrA gene; the 2 termini fold to resemble tRNA(Ala) and it encodes a 'tag peptide', a short internal open reading frame. During trans-translation Ala-aminoacylated tmRNA acts like a tRNA, entering the A-site of stalled ribosomes, displacing the stalled mRNA. The ribosome then switches to translate the ORF on the tmRNA; the nascent peptide is terminated with the 'tag peptide' encoded by the tmRNA and targeted for degradation. The ribosome is freed to recommence translation, which seems to be the essential function of trans-translation. This Rickettsia bellii (strain OSU 85-389) protein is SsrA-binding protein.